Here is an 817-residue protein sequence, read N- to C-terminus: Trehalose-phosphatase (817 aa).

The segment at 1–547 (MSVYGKIPST…LAATKTDQRI (547 aa)) is glycosyltransferase.

In the N-terminal section; belongs to the glycosyltransferase 20 family. This sequence in the C-terminal section; belongs to the trehalose phosphatase family. As to quaternary structure, component of the trehalose synthase complex that contains at least tps1, ntp1, and tpp1. Interacts with tps1. Interacts with ntp1. It depends on Mg(2+) as a cofactor.

The enzyme catalyses alpha,alpha-trehalose 6-phosphate + H2O = alpha,alpha-trehalose + phosphate. The protein operates within carbohydrate biosynthesis. Phosphatase catalytic subunit of the trehalose synthase complex that catalyzes the production of trehalose from glucose-6-phosphate and UDP-alpha-D-glucose in a two step process. The disaccharide trehalose serves as a storage carbohydrate that is mobilized during nutrient stress and spore germination. Together with ntp1, regulates the level of trehalose as a protectant for cell integrity during thermal, osmotic, and oxidative stress. This chain is Trehalose-phosphatase, found in Schizosaccharomyces pombe (strain 972 / ATCC 24843) (Fission yeast).